The primary structure comprises 426 residues: Glutamate-1-semialdehyde 2,1-aminomutase (426 aa).

Residue Lys265 is modified to N6-(pyridoxal phosphate)lysine.

The protein belongs to the class-III pyridoxal-phosphate-dependent aminotransferase family. HemL subfamily. In terms of assembly, homodimer. The cofactor is pyridoxal 5'-phosphate.

It is found in the cytoplasm. The enzyme catalyses (S)-4-amino-5-oxopentanoate = 5-aminolevulinate. It functions in the pathway porphyrin-containing compound metabolism; protoporphyrin-IX biosynthesis; 5-aminolevulinate from L-glutamyl-tRNA(Glu): step 2/2. This is Glutamate-1-semialdehyde 2,1-aminomutase from Actinobacillus pleuropneumoniae serotype 5b (strain L20).